The sequence spans 347 residues: NADH-ubiquinone oxidoreductase chain 2 (347 aa).

Transmembrane regions (helical) follow at residues 1–21, 25–45, 67–87, 111–131, 144–164, 178–198, 201–221, 237–257, 274–294, and 326–346; these read MNPL…LIVM, HWFM…PLLT, SMLL…WSIM, FHFW…LILL, MIMP…SIAI, IMAY…AYNP, TLLN…LLMI, LPLI…LPPL, SSII…YFYT, and LPLM…MPIL.

The protein belongs to the complex I subunit 2 family. In terms of assembly, core subunit of respiratory chain NADH dehydrogenase (Complex I) which is composed of 45 different subunits. Interacts with TMEM242.

The protein resides in the mitochondrion inner membrane. It carries out the reaction a ubiquinone + NADH + 5 H(+)(in) = a ubiquinol + NAD(+) + 4 H(+)(out). In terms of biological role, core subunit of the mitochondrial membrane respiratory chain NADH dehydrogenase (Complex I) which catalyzes electron transfer from NADH through the respiratory chain, using ubiquinone as an electron acceptor. Essential for the catalytic activity and assembly of complex I. The sequence is that of NADH-ubiquinone oxidoreductase chain 2 from Myotis simus (Velvety myotis).